The primary structure comprises 310 residues: Protein DOS2 (310 aa).

2 stretches are compositionally biased toward basic and acidic residues: residues 15–26 and 135–146; these read DKISNSHTKETG and SNDKDENSKENE. 2 disordered regions span residues 15–45 and 131–151; these read DKIS…KTNE and AEND…AVGG. One can recognise a BSD domain in the interval 176-228; sequence QLDPFDVDEKTEEICSILQGDKDISKLMNDIVPHKISYKDFWHIYFLQRNKIL. The tract at residues 240–310 is disordered; sequence KKEKETEEKE…KDDDDDDDWE (71 aa). The segment covering 247–263 has biased composition (acidic residues); it reads EKEVEWDDEEEEEDDDK. Basic and acidic residues-rich tracts occupy residues 264–276 and 284–300; these read VEAV…KGET and GLKD…KDES. Acidic residues predominate over residues 301–310; it reads KDDDDDDDWE.

In terms of biological role, acts in ubiquitin metabolism and is necessary for the control of single-copy DNA replication. This Saccharomyces cerevisiae (strain ATCC 204508 / S288c) (Baker's yeast) protein is Protein DOS2 (DOS2).